A 337-amino-acid polypeptide reads, in one-letter code: Fructose-1,6-bisphosphatase class 1 (337 aa).

4 residues coordinate Mg(2+): Glu91, Asp113, Leu115, and Asp116. Substrate contacts are provided by residues 116–119 (DGSS), Asn209, Tyr242, and Lys275. A Mg(2+)-binding site is contributed by Glu281.

It belongs to the FBPase class 1 family. Homotetramer. It depends on Mg(2+) as a cofactor.

It localises to the cytoplasm. It catalyses the reaction beta-D-fructose 1,6-bisphosphate + H2O = beta-D-fructose 6-phosphate + phosphate. The protein operates within carbohydrate biosynthesis; gluconeogenesis. This is Fructose-1,6-bisphosphatase class 1 from Nitratidesulfovibrio vulgaris (strain DP4) (Desulfovibrio vulgaris).